The following is a 554-amino-acid chain: Dihydroxy-acid dehydratase (554 aa).

Residue aspartate 78 participates in Mg(2+) binding. Residue cysteine 119 coordinates [2Fe-2S] cluster. 2 residues coordinate Mg(2+): aspartate 120 and lysine 121. The residue at position 121 (lysine 121) is an N6-carboxylysine. Cysteine 192 is a [2Fe-2S] cluster binding site. Glutamate 443 lines the Mg(2+) pocket. Serine 469 functions as the Proton acceptor in the catalytic mechanism.

This sequence belongs to the IlvD/Edd family. As to quaternary structure, homodimer. The cofactor is [2Fe-2S] cluster. Mg(2+) serves as cofactor.

The catalysed reaction is (2R)-2,3-dihydroxy-3-methylbutanoate = 3-methyl-2-oxobutanoate + H2O. It catalyses the reaction (2R,3R)-2,3-dihydroxy-3-methylpentanoate = (S)-3-methyl-2-oxopentanoate + H2O. Its pathway is amino-acid biosynthesis; L-isoleucine biosynthesis; L-isoleucine from 2-oxobutanoate: step 3/4. It participates in amino-acid biosynthesis; L-valine biosynthesis; L-valine from pyruvate: step 3/4. Functionally, functions in the biosynthesis of branched-chain amino acids. Catalyzes the dehydration of (2R,3R)-2,3-dihydroxy-3-methylpentanoate (2,3-dihydroxy-3-methylvalerate) into 2-oxo-3-methylpentanoate (2-oxo-3-methylvalerate) and of (2R)-2,3-dihydroxy-3-methylbutanoate (2,3-dihydroxyisovalerate) into 2-oxo-3-methylbutanoate (2-oxoisovalerate), the penultimate precursor to L-isoleucine and L-valine, respectively. In Clostridium novyi (strain NT), this protein is Dihydroxy-acid dehydratase.